The chain runs to 152 residues: Small ribosomal subunit protein uS19x (152 aa).

This sequence belongs to the universal ribosomal protein uS19 family.

Its subcellular location is the cytoplasm. The protein is Small ribosomal subunit protein uS19x (RPS15D) of Arabidopsis thaliana (Mouse-ear cress).